The sequence spans 338 residues: tRNA-specific 2-thiouridylase MnmA (338 aa).

ATP contacts are provided by residues 6–13 and methionine 32; that span reads AMSGGVDS. The active-site Nucleophile is cysteine 92. Cysteine 92 and cysteine 186 are joined by a disulfide. Glycine 116 is an ATP binding site. The tract at residues 134–136 is interaction with tRNA; sequence KDQ. Cysteine 186 functions as the Cysteine persulfide intermediate in the catalytic mechanism. Residues 288 to 289 are interaction with tRNA; it reads RY.

It belongs to the MnmA/TRMU family.

It is found in the cytoplasm. The catalysed reaction is S-sulfanyl-L-cysteinyl-[protein] + uridine(34) in tRNA + AH2 + ATP = 2-thiouridine(34) in tRNA + L-cysteinyl-[protein] + A + AMP + diphosphate + H(+). In terms of biological role, catalyzes the 2-thiolation of uridine at the wobble position (U34) of tRNA, leading to the formation of s(2)U34. This is tRNA-specific 2-thiouridylase MnmA from Campylobacter jejuni subsp. jejuni serotype O:2 (strain ATCC 700819 / NCTC 11168).